The chain runs to 92 residues: DNA-directed RNA polymerase subunit omega (92 aa).

This sequence belongs to the RNA polymerase subunit omega family. In terms of assembly, the RNAP catalytic core consists of 2 alpha, 1 beta, 1 beta' and 1 omega subunit. When a sigma factor is associated with the core the holoenzyme is formed, which can initiate transcription.

It carries out the reaction RNA(n) + a ribonucleoside 5'-triphosphate = RNA(n+1) + diphosphate. In terms of biological role, promotes RNA polymerase assembly. Latches the N- and C-terminal regions of the beta' subunit thereby facilitating its interaction with the beta and alpha subunits. The polypeptide is DNA-directed RNA polymerase subunit omega (Shewanella oneidensis (strain ATCC 700550 / JCM 31522 / CIP 106686 / LMG 19005 / NCIMB 14063 / MR-1)).